A 504-amino-acid chain; its full sequence is L-carnitine/gamma-butyrobetaine antiporter (504 aa).

12 helical membrane passes run 10-30, 51-71, 92-112, 143-163, 195-215, 231-251, 263-283, 316-336, 347-367, 398-418, 446-466, and 475-495; these read IEPK…WLTV, WGWA…WLVF, IFMM…SIEI, GPLP…FFFV, FYLV…TPLV, LDAI…ACGL, SYLS…SFIM, WTVF…IFLA, LCFG…TVLG, WAAL…CFIA, LLVR…LLAL, and AIIA…LSFI.

It belongs to the BCCT transporter (TC 2.A.15) family. CaiT subfamily. Homotrimer.

It is found in the cell inner membrane. It catalyses the reaction 4-(trimethylamino)butanoate(in) + (R)-carnitine(out) = 4-(trimethylamino)butanoate(out) + (R)-carnitine(in). It participates in amine and polyamine metabolism; carnitine metabolism. Catalyzes the exchange of L-carnitine for gamma-butyrobetaine. The chain is L-carnitine/gamma-butyrobetaine antiporter from Escherichia coli O6:K15:H31 (strain 536 / UPEC).